A 196-amino-acid polypeptide reads, in one-letter code: Anthranilate synthase component 2 (196 aa).

Residues 3–196 (NILLLDNFDS…INWASLKYKG (194 aa)) form the Glutamine amidotransferase type-1 domain. 57–59 (GPS) is an L-glutamine binding site. C84 functions as the Nucleophile; for GATase activity in the catalytic mechanism. L-glutamine-binding positions include Q88 and 134-135 (SL). Catalysis depends on for GATase activity residues H170 and E172.

As to quaternary structure, heterotetramer consisting of two non-identical subunits: a beta subunit (TrpG) and a large alpha subunit (TrpE).

It carries out the reaction chorismate + L-glutamine = anthranilate + pyruvate + L-glutamate + H(+). Its pathway is amino-acid biosynthesis; L-tryptophan biosynthesis; L-tryptophan from chorismate: step 1/5. Its function is as follows. Part of a heterotetrameric complex that catalyzes the two-step biosynthesis of anthranilate, an intermediate in the biosynthesis of L-tryptophan. In the first step, the glutamine-binding beta subunit (TrpG) of anthranilate synthase (AS) provides the glutamine amidotransferase activity which generates ammonia as a substrate that, along with chorismate, is used in the second step, catalyzed by the large alpha subunit of AS (TrpE) to produce anthranilate. In the absence of TrpG, TrpE can synthesize anthranilate directly from chorismate and high concentrations of ammonia. The protein is Anthranilate synthase component 2 (trpG) of Buchnera aphidicola subsp. Schizaphis graminum (strain Sg).